Here is a 245-residue protein sequence, read N- to C-terminus: 2,3-bisphosphoglycerate-dependent phosphoglycerate mutase (245 aa).

Substrate is bound by residues 8-15 (RHGQSLWN), 21-22 (TG), Arg-60, 87-90 (ERHY), Lys-98, 114-115 (RR), and 183-184 (GN). The active-site Tele-phosphohistidine intermediate is His-9. Glu-87 acts as the Proton donor/acceptor in catalysis.

It belongs to the phosphoglycerate mutase family. BPG-dependent PGAM subfamily.

The enzyme catalyses (2R)-2-phosphoglycerate = (2R)-3-phosphoglycerate. It participates in carbohydrate degradation; glycolysis; pyruvate from D-glyceraldehyde 3-phosphate: step 3/5. Its function is as follows. Catalyzes the interconversion of 2-phosphoglycerate and 3-phosphoglycerate. The protein is 2,3-bisphosphoglycerate-dependent phosphoglycerate mutase of Bacillus cereus (strain ATCC 14579 / DSM 31 / CCUG 7414 / JCM 2152 / NBRC 15305 / NCIMB 9373 / NCTC 2599 / NRRL B-3711).